A 509-amino-acid chain; its full sequence is Light-independent protochlorophyllide reductase subunit B (509 aa).

Asp-36 provides a ligand contact to [4Fe-4S] cluster. The Proton donor role is filled by Asp-298. Gly-433 to Met-434 contacts substrate.

Belongs to the ChlB/BchB/BchZ family. Protochlorophyllide reductase is composed of three subunits; ChlL, ChlN and ChlB. Forms a heterotetramer of two ChlB and two ChlN subunits. It depends on [4Fe-4S] cluster as a cofactor.

Its subcellular location is the plastid. It localises to the chloroplast. The catalysed reaction is chlorophyllide a + oxidized 2[4Fe-4S]-[ferredoxin] + 2 ADP + 2 phosphate = protochlorophyllide a + reduced 2[4Fe-4S]-[ferredoxin] + 2 ATP + 2 H2O. Its pathway is porphyrin-containing compound metabolism; chlorophyll biosynthesis (light-independent). Functionally, component of the dark-operative protochlorophyllide reductase (DPOR) that uses Mg-ATP and reduced ferredoxin to reduce ring D of protochlorophyllide (Pchlide) to form chlorophyllide a (Chlide). This reaction is light-independent. The NB-protein (ChlN-ChlB) is the catalytic component of the complex. The sequence is that of Light-independent protochlorophyllide reductase subunit B from Ephedra altissima (High-climbing jointfir).